The primary structure comprises 536 residues: Formate--tetrahydrofolate ligase (536 aa).

ATP is bound at residue 51–58 (TPAGEGKT).

This sequence belongs to the formate--tetrahydrofolate ligase family.

The enzyme catalyses (6S)-5,6,7,8-tetrahydrofolate + formate + ATP = (6R)-10-formyltetrahydrofolate + ADP + phosphate. It functions in the pathway one-carbon metabolism; tetrahydrofolate interconversion. This Thermoplasma acidophilum (strain ATCC 25905 / DSM 1728 / JCM 9062 / NBRC 15155 / AMRC-C165) protein is Formate--tetrahydrofolate ligase.